The sequence spans 494 residues: Alpha-amylase-related protein (494 aa).

Residues 1–20 form the signal peptide; sequence MIKFALALTLCLAGASLSLA. The residue at position 21 (Gln21) is a Pyrrolidone carboxylic acid. Cysteines 48 and 104 form a disulfide. Ca(2+)-binding residues include Asn118, Gln169, and Asp178. Cysteines 157 and 171 form a disulfide. Arg206 provides a ligand contact to chloride. Asp208 functions as the Nucleophile in the catalytic mechanism. Residue His212 participates in Ca(2+) binding. Glu245 functions as the Proton donor in the catalytic mechanism. Chloride contacts are provided by Asn308 and Arg343. 3 disulfide bridges follow: Cys376-Cys382, Cys418-Cys441, and Cys448-Cys460.

This sequence belongs to the glycosyl hydrolase 13 family. Monomer. Ca(2+) is required as a cofactor. It depends on chloride as a cofactor.

It is found in the secreted. It carries out the reaction Endohydrolysis of (1-&gt;4)-alpha-D-glucosidic linkages in polysaccharides containing three or more (1-&gt;4)-alpha-linked D-glucose units.. This Drosophila bocqueti (Fruit fly) protein is Alpha-amylase-related protein (Amyrel).